The following is a 189-amino-acid chain: NADH-quinone oxidoreductase subunit B (189 aa).

Cysteine 39, cysteine 40, cysteine 104, and cysteine 135 together coordinate [4Fe-4S] cluster.

The protein belongs to the complex I 20 kDa subunit family. In terms of assembly, NDH-1 is composed of 14 different subunits. Subunits NuoB, C, D, E, F, and G constitute the peripheral sector of the complex. [4Fe-4S] cluster serves as cofactor.

It localises to the cell inner membrane. It catalyses the reaction a quinone + NADH + 5 H(+)(in) = a quinol + NAD(+) + 4 H(+)(out). In terms of biological role, NDH-1 shuttles electrons from NADH, via FMN and iron-sulfur (Fe-S) centers, to quinones in the respiratory chain. The immediate electron acceptor for the enzyme in this species is believed to be a menaquinone. Couples the redox reaction to proton translocation (for every two electrons transferred, four hydrogen ions are translocated across the cytoplasmic membrane), and thus conserves the redox energy in a proton gradient. This is NADH-quinone oxidoreductase subunit B from Chlorobaculum parvum (strain DSM 263 / NCIMB 8327) (Chlorobium vibrioforme subsp. thiosulfatophilum).